Consider the following 81-residue polypeptide: Translational regulator CsrA (81 aa).

The protein belongs to the CsrA/RsmA family. In terms of assembly, homodimer; the beta-strands of each monomer intercalate to form a hydrophobic core, while the alpha-helices form wings that extend away from the core.

It localises to the cytoplasm. In terms of biological role, a translational regulator that binds mRNA to regulate translation initiation and/or mRNA stability. Usually binds in the 5'-UTR at or near the Shine-Dalgarno sequence preventing ribosome-binding, thus repressing translation. Its main target seems to be the major flagellin gene, while its function is anatagonized by FliW. The sequence is that of Translational regulator CsrA from Halothermothrix orenii (strain H 168 / OCM 544 / DSM 9562).